The following is a 305-amino-acid chain: Probable lipid kinase YegS-like (305 aa).

The region spanning Met-1–Leu-129 is the DAGKc domain. ATP contacts are provided by residues Thr-39, Gly-65–Asp-71, and Thr-92. Leu-210, Asp-213, and Leu-215 together coordinate Mg(2+). Glu-268 (proton acceptor) is an active-site residue.

It belongs to the diacylglycerol/lipid kinase family. YegS lipid kinase subfamily. It depends on Mg(2+) as a cofactor. Requires Ca(2+) as cofactor.

It is found in the cytoplasm. Functionally, probably phosphorylates lipids; the in vivo substrate is unknown. This is Probable lipid kinase YegS-like from Pseudomonas savastanoi pv. phaseolicola (strain 1448A / Race 6) (Pseudomonas syringae pv. phaseolicola (strain 1448A / Race 6)).